The primary structure comprises 234 residues: Adenylate dimethylallyltransferase (234 aa).

It belongs to the isopentenyl transferase family.

The catalysed reaction is dimethylallyl diphosphate + AMP = N(6)-(dimethylallyl)adenosine 5'-phosphate + diphosphate. Functionally, transfers dimethylallyl groups to AMP as part of the biosynthesis of cytokinin phytohormones. This chain is Adenylate dimethylallyltransferase (ptz), found in Pseudomonas savastanoi (Pseudomonas syringae pv. savastanoi).